The primary structure comprises 155 residues: Interleukin-2 (155 aa).

A signal peptide spans 1–20 (MYKIQLLSCIALTLALVANG). Threonine 23 carries an O-linked (GalNAc...) threonine glycan. Cysteine 79 and cysteine 127 are oxidised to a cystine.

Belongs to the IL-2 family.

Its subcellular location is the secreted. Functionally, cytokine produced by activated CD4-positive helper T-cells and to a lesser extend activated CD8-positive T-cells and natural killer (NK) cells that plays pivotal roles in the immune response and tolerance. Binds to a receptor complex composed of either the high-affinity trimeric IL-2R (IL2RA/CD25, IL2RB/CD122 and IL2RG/CD132) or the low-affinity dimeric IL-2R (IL2RB and IL2RG). Interaction with the receptor leads to oligomerization and conformation changes in the IL-2R subunits resulting in downstream signaling starting with phosphorylation of JAK1 and JAK3. In turn, JAK1 and JAK3 phosphorylate the receptor to form a docking site leading to the phosphorylation of several substrates including STAT5. This process leads to activation of several pathways including STAT, phosphoinositide-3-kinase/PI3K and mitogen-activated protein kinase/MAPK pathways. Functions as a T-cell growth factor and can increase NK-cell cytolytic activity as well. Promotes strong proliferation of activated B-cells and subsequently immunoglobulin production. Plays a pivotal role in regulating the adaptive immune system by controlling the survival and proliferation of regulatory T-cells, which are required for the maintenance of immune tolerance. Moreover, participates in the differentiation and homeostasis of effector T-cell subsets, including Th1, Th2, Th17 as well as memory CD8-positive T-cells. This is Interleukin-2 (IL2) from Moschus berezovskii (Chinese forest musk deer).